Consider the following 121-residue polypeptide: LOB domain-containing protein 24 (121 aa).

The region spanning 4 to 105 (KRCAACKYLR…NELAKTQAEI (102 aa)) is the LOB domain.

Belongs to the LOB domain-containing protein family.

The polypeptide is LOB domain-containing protein 24 (LBD24) (Arabidopsis thaliana (Mouse-ear cress)).